The sequence spans 496 residues: Glycerol kinase (496 aa).

Thr12 contributes to the ADP binding site. ATP-binding residues include Thr12, Thr13, and Ser14. Thr12 provides a ligand contact to sn-glycerol 3-phosphate. Arg16 contacts ADP. Sn-glycerol 3-phosphate contacts are provided by Arg82, Glu83, and Tyr134. Residues Arg82, Glu83, and Tyr134 each contribute to the glycerol site. His230 is modified (phosphohistidine; by HPr). Sn-glycerol 3-phosphate is bound at residue Asp244. Glycerol-binding residues include Asp244 and Gln245. ADP contacts are provided by Thr266 and Gly309. ATP is bound by residues Thr266, Gly309, Gln313, and Gly410. Residues Gly410 and Asn414 each coordinate ADP.

It belongs to the FGGY kinase family. Post-translationally, the phosphoenolpyruvate-dependent sugar phosphotransferase system (PTS), including enzyme I, and histidine-containing protein (HPr) are required for the phosphorylation of, which leads to the activation of the enzyme.

It carries out the reaction glycerol + ATP = sn-glycerol 3-phosphate + ADP + H(+). The protein operates within polyol metabolism; glycerol degradation via glycerol kinase pathway; sn-glycerol 3-phosphate from glycerol: step 1/1. With respect to regulation, inhibited by fructose 1,6-bisphosphate and p-chloromercuribenzoate (PCMB). Its function is as follows. Key enzyme in the regulation of glycerol uptake and metabolism. Catalyzes the phosphorylation of glycerol to yield sn-glycerol 3-phosphate. The chain is Glycerol kinase from Thermus thermophilus.